A 171-amino-acid chain; its full sequence is Interleukin-26 (171 aa).

Residues 1–21 (MLVNFILRCGLLLVTLSLAIA) form the signal peptide.

Belongs to the IL-10 family. As to quaternary structure, homodimer. As to expression, expressed in HVS transformed T-cells but not other T-cell lines or primary stimulated T-cells. Expressed in colonic T-cells including Th17 inflammatory T-cells; the expression is significantly increased in serum of patients with Crohn's disease (at protein level).

The protein resides in the secreted. In terms of biological role, may play a role in local mechanisms of mucosal immunity and seems to have a pro-inflammatory function. May play a role in inflammatory bowel disease. Activates STAT1 and STAT3, MAPK1/3 (ERK1/2), JUN and AKT. Induces expression of SOCS3, TNF-alpha and IL-8, secretion of IL-8 and IL-10 and surface expression of ICAM1. Decreases proliferation of intestinal epithelial cells. Is inhibited by heparin. The sequence is that of Interleukin-26 (IL26) from Homo sapiens (Human).